Consider the following 642-residue polypeptide: Threonine--tRNA ligase (642 aa).

In terms of domain architecture, TGS spans 1 to 61 (MPVIRFYDGS…REDAFIEFVD (61 aa)). The interval 243–534 (DHRKIGKFLQ…LIEECSGNLP (292 aa)) is catalytic. 3 residues coordinate Zn(2+): cysteine 334, histidine 385, and histidine 511.

Belongs to the class-II aminoacyl-tRNA synthetase family. Homodimer. Requires Zn(2+) as cofactor.

The protein localises to the cytoplasm. The catalysed reaction is tRNA(Thr) + L-threonine + ATP = L-threonyl-tRNA(Thr) + AMP + diphosphate + H(+). Functionally, catalyzes the attachment of threonine to tRNA(Thr) in a two-step reaction: L-threonine is first activated by ATP to form Thr-AMP and then transferred to the acceptor end of tRNA(Thr). Also edits incorrectly charged L-seryl-tRNA(Thr). This is Threonine--tRNA ligase from Buchnera aphidicola subsp. Acyrthosiphon pisum (strain APS) (Acyrthosiphon pisum symbiotic bacterium).